The following is a 513-amino-acid chain: Flavonoid 3',5'-hydroxylase (513 aa).

Cysteine 446 serves as a coordination point for heme.

The protein belongs to the cytochrome P450 family. Heme serves as cofactor. In terms of tissue distribution, hypocotyl tissues.

It catalyses the reaction a 3',5'-unsubstituted flavanone + 2 reduced [NADPH--hemoprotein reductase] + 2 O2 = a 3',5'-dihydroxyflavanone + 2 oxidized [NADPH--hemoprotein reductase] + 2 H2O + 2 H(+). Its pathway is pigment biosynthesis; anthocyanin biosynthesis. In terms of biological role, catalyzes the 3'5'-hydroxylation of naringenin and eriodictyol to form 5,7,3,'4',5'-pentahydroxyflavanone and 3',5'-hydroxylation of dihydrokaempferol and dihydroquercetin to form dihydromyricetin. The polypeptide is Flavonoid 3',5'-hydroxylase (CYP75A2) (Solanum melongena (Eggplant)).